Consider the following 123-residue polypeptide: Small ribosomal subunit protein uS12cz/uS12cy (123 aa).

Belongs to the universal ribosomal protein uS12 family. As to quaternary structure, part of the 30S ribosomal subunit.

Its subcellular location is the plastid. It localises to the chloroplast. With S4 and S5 plays an important role in translational accuracy. Located at the interface of the 30S and 50S subunits. In Angiopteris evecta (Mule's foot fern), this protein is Small ribosomal subunit protein uS12cz/uS12cy (rps12-A).